The following is a 630-amino-acid chain: Polypeptide N-acetylgalactosaminyltransferase 5 (630 aa).

The Cytoplasmic portion of the chain corresponds to 1–20 (MTFSTFTRKMRGRMRSNTCR). Residues 21–38 (IVLLTSLVWVIFDFVLIA) form a helical; Signal-anchor for type II membrane protein membrane-spanning segment. Over 39–630 (RYSDCIGKDG…MESKFKWQAH (592 aa)) the chain is Lumenal. A glycan (N-linked (GlcNAc...) asparagine) is linked at N166. Disulfide bonds link C177-C410, C401-C479, C513-C530, C553-C568, and C594-C611. Positions 186 to 296 (LPTTSIVIVF…EGWLEPLLAR (111 aa)) are catalytic subdomain A. The substrate site is built by D227 and R257. D280 and H282 together coordinate Mn(2+). A catalytic subdomain B region spans residues 356–418 (PLRTPTMAGG…PCSHVGHVFR (63 aa)). Residue W387 coordinates substrate. H415 is a binding site for Mn(2+). Substrate is bound by residues R418 and Y423. Residues 500–622 (YYLGEIRNAE…YGKGQQWLME (123 aa)) form the Ricin B-type lectin domain.

This sequence belongs to the glycosyltransferase 2 family. GalNAc-T subfamily. Mn(2+) serves as cofactor. Expressed during oogenesis, in the somatically derived follicle cells that surround the developing oocyte, which are involved in the maturation of the oocyte and construction of the egg shell, as well as playing a role in subsequent embryonic pattern formation. During embryonic stages 9-11, expressed in the primordium of the foregut, midgut and hindgut. Expressed in salivary glands from embryonic stage 12 onwards. During embryonic stages 12-13, expressed in the posterior midgut and hindgut. During embryonic stages 14-17, expressed in the hindgut and the posterior spiracles. Expression is also detected in the epidermis and antennomaxillary complex at embryonic stages 16-17. In third instar larvae, ubiquitously expressed in wing, eye-antennal, leg and haltere imaginal disks.

The protein localises to the golgi apparatus membrane. The enzyme catalyses L-seryl-[protein] + UDP-N-acetyl-alpha-D-galactosamine = a 3-O-[N-acetyl-alpha-D-galactosaminyl]-L-seryl-[protein] + UDP + H(+). It catalyses the reaction L-threonyl-[protein] + UDP-N-acetyl-alpha-D-galactosamine = a 3-O-[N-acetyl-alpha-D-galactosaminyl]-L-threonyl-[protein] + UDP + H(+). The protein operates within protein modification; protein glycosylation. Functionally, catalyzes the initial reaction in O-linked oligosaccharide biosynthesis, the transfer of an N-acetyl-D-galactosamine residue to a serine or threonine residue on the protein receptor. It can both act as a peptide transferase that transfers GalNAc onto unmodified peptide substrates, and as a glycopeptide transferase that requires the prior addition of a GalNAc on a peptide before adding additional GalNAc moieties. Prefers EA2 as substrate. In the larval midgut, required for O-glycosylation of apical and luminal proteins within copper cells enabling proper gut acidification. This is Polypeptide N-acetylgalactosaminyltransferase 5 from Drosophila melanogaster (Fruit fly).